A 274-amino-acid polypeptide reads, in one-letter code: Protein CIMAP1C (274 aa).

The tract at residues 1–27 is disordered; sequence MKLPKGTRSSVYFAQHPEKEPLPSRQE. Over residues 16-27 the composition is skewed to basic and acidic residues; sequence HPEKEPLPSRQE. 2 STPGR repeats span residues 199-224 and 235-260; these read PGPT…MAKR and PGPG…MGIK.

The protein belongs to the CIMAP family.

The polypeptide is Protein CIMAP1C (Homo sapiens (Human)).